We begin with the raw amino-acid sequence, 272 residues long: uncharacterized protein (272 aa).

The protein belongs to the sodium:galactoside symporter (TC 2.A.2) family.

This is an uncharacterized protein from Pseudescherichia vulneris (Escherichia vulneris).